The sequence spans 300 residues: 1D-myo-inositol 2-acetamido-2-deoxy-alpha-D-glucopyranoside deacetylase (300 aa).

Zn(2+) contacts are provided by His-13, Asp-16, and His-147.

It belongs to the MshB deacetylase family. Zn(2+) is required as a cofactor.

The catalysed reaction is 1D-myo-inositol 2-acetamido-2-deoxy-alpha-D-glucopyranoside + H2O = 1D-myo-inositol 2-amino-2-deoxy-alpha-D-glucopyranoside + acetate. Its function is as follows. Catalyzes the deacetylation of 1D-myo-inositol 2-acetamido-2-deoxy-alpha-D-glucopyranoside (GlcNAc-Ins) in the mycothiol biosynthesis pathway. The protein is 1D-myo-inositol 2-acetamido-2-deoxy-alpha-D-glucopyranoside deacetylase of Mycobacterium avium (strain 104).